The chain runs to 185 residues: Homeobox expressed in ES cells 1 (185 aa).

Positions 108–167 form a DNA-binding region, homeobox; that stretch reads GRRPRTAFTQNQIEVLENVFRVNCYPGIDIREDLAQKLNLEEDRIQIWFQNRRAKLKRSH.

Belongs to the ANF homeobox family. As to quaternary structure, can form heterodimers with PROP1 in binding to DNA. Interacts with TLE1.

It is found in the nucleus. Functionally, required for the normal development of the forebrain, eyes and other anterior structures such as the olfactory placodes and pituitary gland. Possible transcriptional repressor. Binds to the palindromic PIII sequence, 5'-AGCTTGAGTCTAATTGAATTAACTGTAC-3'. HESX1 and PROP1 bind as heterodimers on this palindromic site, and, in vitro, HESX1 can antagonize PROP1 activation. The sequence is that of Homeobox expressed in ES cells 1 (HESX1) from Pan troglodytes (Chimpanzee).